A 253-amino-acid chain; its full sequence is Indole-3-glycerol phosphate synthase (253 aa).

The protein belongs to the TrpC family.

It catalyses the reaction 1-(2-carboxyphenylamino)-1-deoxy-D-ribulose 5-phosphate + H(+) = (1S,2R)-1-C-(indol-3-yl)glycerol 3-phosphate + CO2 + H2O. It participates in amino-acid biosynthesis; L-tryptophan biosynthesis; L-tryptophan from chorismate: step 4/5. The chain is Indole-3-glycerol phosphate synthase from Bacillus cereus (strain G9842).